Consider the following 216-residue polypeptide: Probable GTP-binding protein EngB (216 aa).

One can recognise an EngB-type G domain in the interval 23-197 (EGAEIAFAGR…EHKVAGWLGL (175 aa)). Residues 31-38 (GRSNAGKS), 58-62 (GRTQL), 76-79 (DLPG), 143-146 (TKCD), and 176-178 (FSS) each bind GTP. Residues Ser38 and Thr60 each coordinate Mg(2+).

Belongs to the TRAFAC class TrmE-Era-EngA-EngB-Septin-like GTPase superfamily. EngB GTPase family. The cofactor is Mg(2+).

Its function is as follows. Necessary for normal cell division and for the maintenance of normal septation. The protein is Probable GTP-binding protein EngB of Aromatoleum aromaticum (strain DSM 19018 / LMG 30748 / EbN1) (Azoarcus sp. (strain EbN1)).